The following is a 509-amino-acid chain: Putative ATP-dependent RNA helicase QP509L (509 aa).

A Helicase ATP-binding domain is found at 110–262 (KKLLPPYGRF…KIIIHHLGQP (153 aa)). 123–130 (LNTGLGKT) is an ATP binding site. The DEAH box motif lies at 215 to 218 (DEAH).

It belongs to the DEAD box helicase family. DEAH subfamily.

The catalysed reaction is ATP + H2O = ADP + phosphate + H(+). The chain is Putative ATP-dependent RNA helicase QP509L from African swine fever virus (isolate Tick/Malawi/Lil 20-1/1983) (ASFV).